Here is a 462-residue protein sequence, read N- to C-terminus: Sensor histidine kinase RegB (462 aa).

At 1–25 (MILGPDGILNRDTRGDWWRLRTLIL) the chain is on the cytoplasmic side. A helical membrane pass occupies residues 26–45 (LRWMAVAGQLAAIVVTDWYL). Over 46 to 51 (GVRLPM) the chain is Extracellular. A helical membrane pass occupies residues 52–70 (GLCFMAVGASVIANVIATF). At 71–78 (VFPQNRRL) the chain is on the cytoplasmic side. A helical membrane pass occupies residues 79-96 (TEFQALMILLFDLTQLSF). At 97-103 (LLFLTGG) the chain is on the extracellular side. The helical transmembrane segment at 104–123 (LTNPFALLILAPVTISGVAL) threads the bilayer. The Cytoplasmic segment spans residues 124–129 (DVRTTV). The chain crosses the membrane as a helical span at residues 130–149 (ILGAIAIGLLTFTAYFHLPL). The Extracellular portion of the chain corresponds to 150 to 164 (ILADGSSLSVPRMFE). The chain crosses the membrane as a helical span at residues 165-182 (FGFWLAIVIGILFLGLYS). Residues 183-462 (RRVAIEIRSM…PLGENVLIQT (280 aa)) lie on the Cytoplasmic side of the membrane. The region spanning 218–445 (AAAHELGTPL…IVEVIWPVDR (228 aa)) is the Histidine kinase domain. H221 carries the phosphohistidine; by autocatalysis modification.

The protein localises to the cell inner membrane. It catalyses the reaction ATP + protein L-histidine = ADP + protein N-phospho-L-histidine.. In terms of biological role, member of the two-component regulatory system RegB/RegA. Involved in the positive regulation of photosynthesis gene expression in response to anaerobiosis. Also involved in positive regulation of the cbbI and cbbII Calvin cycle CO2 fixation operons, as well as in regulation of expression of genes involved in alternative CO2 fixation pathways. Phosphorylates RegA/PrrA. The polypeptide is Sensor histidine kinase RegB (regB) (Cereibacter sphaeroides (Rhodobacter sphaeroides)).